We begin with the raw amino-acid sequence, 493 residues long: MKYNDLRDFIALLEARGLLKRIKQEIDPHLEMTEICDRTLRAGGPALLFENPRGYTIPVLGNLFGTPERVALGMGQESVSALRDVGKLLAFLKEPEPPKGFKDAWEKLPIFKQVLNMAPKVVGKAPSQEVVLEGDAVNLDQLPIQTCWPGDAGPLVTWPLVVTRGPHKERQNLGIYRMQKIGKNRLIMRWLSHRGGALDFREFQLQHPGKPFPVAVALGADPATILGAVTPVPDTLSEYAFAGLLRGDKTEVVQCIGNDLQVPASAEFILEGFIAPGDMAPEGPFGDHTGYYNEVDKFPVFTVERITHRRDPIYHSTYTGRPPDEPAILGVALNEVFVPILQKQFPEIVDFYLPPEGCSYRMAVVTMKKQYPGHAKRVMMGVWSFLRQFMYTKFVIVTDDDVNARDWKDVIWAMTTRMDPARDTVMVDNTPIDYLDFASPVSGLGSKIGFDATNKWPGETQREWGTPIAMEQAVKDRVDAIWESLGIDLPTAY.

Residue asparagine 172 coordinates Mn(2+). Prenylated FMN-binding positions include isoleucine 175–arginine 177, arginine 189–leucine 191, and arginine 194–glycine 195. Glutamate 238 serves as a coordination point for Mn(2+). Aspartate 287 serves as the catalytic Proton donor.

It belongs to the UbiD family. As to quaternary structure, homohexamer. The cofactor is prenylated FMN. It depends on Mn(2+) as a cofactor.

The protein resides in the cell membrane. It carries out the reaction a 4-hydroxy-3-(all-trans-polyprenyl)benzoate + H(+) = a 2-(all-trans-polyprenyl)phenol + CO2. Its pathway is cofactor biosynthesis; ubiquinone biosynthesis. Functionally, catalyzes the decarboxylation of 3-octaprenyl-4-hydroxy benzoate to 2-octaprenylphenol, an intermediate step in ubiquinone biosynthesis. This chain is 3-octaprenyl-4-hydroxybenzoate carboxy-lyase, found in Cellvibrio japonicus (strain Ueda107) (Pseudomonas fluorescens subsp. cellulosa).